The chain runs to 178 residues: Gamma-crystallin S (178 aa).

Residue Ser-2 is modified to N-acetylserine. The tract at residues 2–5 (SKSG) is N-terminal arm. 2 consecutive Beta/gamma crystallin 'Greek key' domains span residues 6 to 44 (TKIT…RVEG) and 45 to 87 (GTWA…RAVH). Positions 88 to 93 (LSSGGQ) are connecting peptide. Beta/gamma crystallin 'Greek key' domains lie at 94–134 (YKIQ…KVLD) and 135–177 (GVWI…RRIV).

Belongs to the beta/gamma-crystallin family. In terms of assembly, monomer.

Functionally, crystallins are the dominant structural components of the vertebrate eye lens. This Canis lupus familiaris (Dog) protein is Gamma-crystallin S (CRYGS).